Consider the following 245-residue polypeptide: tRNA pseudouridine synthase A (245 aa).

Residue Asp52 is the Nucleophile of the active site. Tyr111 is a substrate binding site.

The protein belongs to the tRNA pseudouridine synthase TruA family. In terms of assembly, homodimer.

The catalysed reaction is uridine(38/39/40) in tRNA = pseudouridine(38/39/40) in tRNA. Formation of pseudouridine at positions 38, 39 and 40 in the anticodon stem and loop of transfer RNAs. This Xanthobacter autotrophicus (strain ATCC BAA-1158 / Py2) protein is tRNA pseudouridine synthase A.